A 267-amino-acid polypeptide reads, in one-letter code: MADRRNLFFFYGDDKAKLVEKMKPIYRILEENGFTILDHPKNANAIVSVGDDATFLQAVRKTGFREDCLYAGISTKDEISFYCDFHIDHVDIALQEITKNEIEVRKYPTIEVDVDGSTSFHCLNEFSLRSSIIKTFVVDVHVDNLYFETFRGDGLVVSTPTGSTAYNKSLRGAVVDPLIPCFQVSELASLNNNTYRTLGSPFILNHERTLTLKLRPDGNDYPVIGMDNEALSIKQVEKAVVRLSDKQIKTVKLKNNSFWEKVQRTFL.

The Proton acceptor role is filled by Asp52. NAD(+) contacts are provided by residues 52–53, 124–125, Arg151, Asp153, 164–169, and Ala188; these read DA, NE, and TAYNKS.

This sequence belongs to the NAD kinase family. A divalent metal cation serves as cofactor.

Its subcellular location is the cytoplasm. It carries out the reaction NAD(+) + ATP = ADP + NADP(+) + H(+). Functionally, involved in the regulation of the intracellular balance of NAD and NADP, and is a key enzyme in the biosynthesis of NADP. Catalyzes specifically the phosphorylation on 2'-hydroxyl of the adenosine moiety of NAD to yield NADP. This chain is NAD kinase 2, found in Bacillus cereus (strain ATCC 10987 / NRS 248).